The sequence spans 410 residues: Multifunctional CCA protein (410 aa).

ATP-binding residues include G8 and R11. The CTP site is built by G8 and R11. Positions 21 and 23 each coordinate Mg(2+). ATP-binding residues include R91, R137, and R140. CTP is bound by residues R91, R137, and R140. In terms of domain architecture, HD spans 228–329; sequence TGIHSLMTLR…VKLLEQVDAF (102 aa).

The protein belongs to the tRNA nucleotidyltransferase/poly(A) polymerase family. Bacterial CCA-adding enzyme type 1 subfamily. In terms of assembly, monomer. Can also form homodimers and oligomers. The cofactor is Mg(2+). Ni(2+) serves as cofactor.

It catalyses the reaction a tRNA precursor + 2 CTP + ATP = a tRNA with a 3' CCA end + 3 diphosphate. It carries out the reaction a tRNA with a 3' CCA end + 2 CTP + ATP = a tRNA with a 3' CCACCA end + 3 diphosphate. Functionally, catalyzes the addition and repair of the essential 3'-terminal CCA sequence in tRNAs without using a nucleic acid template. Adds these three nucleotides in the order of C, C, and A to the tRNA nucleotide-73, using CTP and ATP as substrates and producing inorganic pyrophosphate. tRNA 3'-terminal CCA addition is required both for tRNA processing and repair. Also involved in tRNA surveillance by mediating tandem CCA addition to generate a CCACCA at the 3' terminus of unstable tRNAs. While stable tRNAs receive only 3'-terminal CCA, unstable tRNAs are marked with CCACCA and rapidly degraded. This Legionella pneumophila (strain Lens) protein is Multifunctional CCA protein.